A 291-amino-acid polypeptide reads, in one-letter code: tRNA dimethylallyltransferase (291 aa).

9–16 (GTTASGKS) contacts ATP. Residue 11–16 (TASGKS) participates in substrate binding. Residues 34-37 (DSLA) are interaction with substrate tRNA.

This sequence belongs to the IPP transferase family. Monomer. Mg(2+) serves as cofactor.

The enzyme catalyses adenosine(37) in tRNA + dimethylallyl diphosphate = N(6)-dimethylallyladenosine(37) in tRNA + diphosphate. Its function is as follows. Catalyzes the transfer of a dimethylallyl group onto the adenine at position 37 in tRNAs that read codons beginning with uridine, leading to the formation of N6-(dimethylallyl)adenosine (i(6)A). The protein is tRNA dimethylallyltransferase of Campylobacter concisus (strain 13826).